Here is a 216-residue protein sequence, read N- to C-terminus: Uracil phosphoribosyltransferase (216 aa).

5-phospho-alpha-D-ribose 1-diphosphate-binding positions include R85, R110, and 135–143 (DPMVATGYS). Uracil is bound by residues I200 and 205-207 (GDA). A 5-phospho-alpha-D-ribose 1-diphosphate-binding site is contributed by D206.

It belongs to the UPRTase family. Mg(2+) is required as a cofactor.

The catalysed reaction is UMP + diphosphate = 5-phospho-alpha-D-ribose 1-diphosphate + uracil. It participates in pyrimidine metabolism; UMP biosynthesis via salvage pathway; UMP from uracil: step 1/1. Allosterically activated by GTP. Catalyzes the conversion of uracil and 5-phospho-alpha-D-ribose 1-diphosphate (PRPP) to UMP and diphosphate. The sequence is that of Uracil phosphoribosyltransferase from Paraburkholderia phymatum (strain DSM 17167 / CIP 108236 / LMG 21445 / STM815) (Burkholderia phymatum).